A 94-amino-acid polypeptide reads, in one-letter code: Small ribosomal subunit protein bS18 (94 aa).

Residues 1–12 (MSEQNSRPQNSE) are compositionally biased toward low complexity. The disordered stretch occupies residues 1–29 (MSEQNSRPQNSERPQRSRRPQGGPRRRRK). The span at 16–29 (RSRRPQGGPRRRRK) shows a compositional bias: basic residues.

This sequence belongs to the bacterial ribosomal protein bS18 family. In terms of assembly, part of the 30S ribosomal subunit. Forms a tight heterodimer with protein bS6.

Its function is as follows. Binds as a heterodimer with protein bS6 to the central domain of the 16S rRNA, where it helps stabilize the platform of the 30S subunit. The polypeptide is Small ribosomal subunit protein bS18 (Leuconostoc mesenteroides subsp. mesenteroides (strain ATCC 8293 / DSM 20343 / BCRC 11652 / CCM 1803 / JCM 6124 / NCDO 523 / NBRC 100496 / NCIMB 8023 / NCTC 12954 / NRRL B-1118 / 37Y)).